The following is a 239-amino-acid chain: Ribonuclease HII (239 aa).

The 214-residue stretch at 18 to 231 (KIIVGLDEAG…SKNLLKEIEE (214 aa)) folds into the RNase H type-2 domain. Residues D24, E25, and D125 each contribute to the a divalent metal cation site.

Belongs to the RNase HII family. It depends on Mn(2+) as a cofactor. Mg(2+) serves as cofactor.

Its subcellular location is the cytoplasm. It catalyses the reaction Endonucleolytic cleavage to 5'-phosphomonoester.. Endonuclease that specifically degrades the RNA of RNA-DNA hybrids. This Methanococcus maripaludis (strain C5 / ATCC BAA-1333) protein is Ribonuclease HII.